Reading from the N-terminus, the 322-residue chain is Probable 2-oxoglutarate-dependent dioxygenase AOP1 (322 aa).

A Fe2OG dioxygenase domain is found at 165–271; sequence TYYLTRLMKY…RYSTGLFSIP (107 aa). Fe cation-binding residues include His195, Asp197, and His252. Arg262 is a 2-oxoglutarate binding site.

Belongs to the iron/ascorbate-dependent oxidoreductase family. Fe(2+) is required as a cofactor.

In terms of biological role, probable 2-oxoglutarate-dependent dioxygenase that may be involved in glucosinolates biosynthesis. May play a role in the production of aliphatic glucosinolates. The chain is Probable 2-oxoglutarate-dependent dioxygenase AOP1 (AOP1) from Arabidopsis thaliana (Mouse-ear cress).